Here is a 165-residue protein sequence, read N- to C-terminus: MGLNLNDKKAVVAEVSAQVANAQTIVIAEYRGIEVTDLTVLRKKARESGVYLRVLKNTLVRRAVADTAFAALADHMVGPLIYSVSADPVAAAKVLSDFAKSNDKLVLKAGSYAGKVLDKAGVQALASVPSREELLSKLLYVMQAPVAGFVRGLAALAAQREEAAA.

The protein belongs to the universal ribosomal protein uL10 family. Part of the ribosomal stalk of the 50S ribosomal subunit. The N-terminus interacts with L11 and the large rRNA to form the base of the stalk. The C-terminus forms an elongated spine to which L12 dimers bind in a sequential fashion forming a multimeric L10(L12)X complex.

Functionally, forms part of the ribosomal stalk, playing a central role in the interaction of the ribosome with GTP-bound translation factors. The polypeptide is Large ribosomal subunit protein uL10 (Dechloromonas aromatica (strain RCB)).